A 133-amino-acid chain; its full sequence is ATP synthase epsilon chain, chloroplastic (133 aa).

The protein belongs to the ATPase epsilon chain family. F-type ATPases have 2 components, CF(1) - the catalytic core - and CF(0) - the membrane proton channel. CF(1) has five subunits: alpha(3), beta(3), gamma(1), delta(1), epsilon(1). CF(0) has three main subunits: a, b and c.

The protein localises to the plastid. The protein resides in the chloroplast thylakoid membrane. Produces ATP from ADP in the presence of a proton gradient across the membrane. The sequence is that of ATP synthase epsilon chain, chloroplastic from Citrus sinensis (Sweet orange).